The following is a 97-amino-acid chain: Aspartyl/glutamyl-tRNA(Asn/Gln) amidotransferase subunit C (97 aa).

The protein belongs to the GatC family. Heterotrimer of A, B and C subunits.

It catalyses the reaction L-glutamyl-tRNA(Gln) + L-glutamine + ATP + H2O = L-glutaminyl-tRNA(Gln) + L-glutamate + ADP + phosphate + H(+). The enzyme catalyses L-aspartyl-tRNA(Asn) + L-glutamine + ATP + H2O = L-asparaginyl-tRNA(Asn) + L-glutamate + ADP + phosphate + 2 H(+). Allows the formation of correctly charged Asn-tRNA(Asn) or Gln-tRNA(Gln) through the transamidation of misacylated Asp-tRNA(Asn) or Glu-tRNA(Gln) in organisms which lack either or both of asparaginyl-tRNA or glutaminyl-tRNA synthetases. The reaction takes place in the presence of glutamine and ATP through an activated phospho-Asp-tRNA(Asn) or phospho-Glu-tRNA(Gln). This is Aspartyl/glutamyl-tRNA(Asn/Gln) amidotransferase subunit C from Synechococcus sp. (strain JA-3-3Ab) (Cyanobacteria bacterium Yellowstone A-Prime).